The chain runs to 541 residues: Beta-hexosaminidase subunit A2 (541 aa).

An N-terminal signal peptide occupies residues 1–21 (MINKFLTIFLIFSIVIIKVLS). The Proton donor role is filled by glutamate 314. N-linked (GlcNAc...) asparagine glycosylation is found at asparagine 322, asparagine 336, asparagine 356, asparagine 435, and asparagine 483.

This sequence belongs to the glycosyl hydrolase 20 family.

The protein localises to the lysosome. The catalysed reaction is Hydrolysis of terminal non-reducing N-acetyl-D-hexosamine residues in N-acetyl-beta-D-hexosaminides.. Its function is as follows. Responsible for the degradation of GM2 gangliosides, and a variety of other molecules containing terminal N-acetyl hexosamines. The protein is Beta-hexosaminidase subunit A2 (hexa2) of Dictyostelium discoideum (Social amoeba).